The primary structure comprises 115 residues: Con-Ins G1b (115 aa).

The first 24 residues, 1–24 (MTTSFYFLLMALGLLLYVCQSSFG), serve as a signal peptide directing secretion. Positions 25–29 (NQHTR) are excised as a propeptide. At P34 the chain carries 4-hydroxyproline; partial. Cystine bridges form between C38–C101, C50–C114, and C100–C105. Residue E41 is modified to 4-carboxyglutamate. The propeptide at 52 to 94 (RKRNDAGEKRGRASPLWQRRGFLSKLKARAKRNGAFHLPRDGR) is c peptide. Residue E98 is modified to 4-carboxyglutamate. P104 bears the 4-hydroxyproline; partial mark. E109 carries the 4-carboxyglutamate; partial modification. The residue at position 114 (C114) is a Cysteine amide.

The protein belongs to the insulin family. Heterodimer of A and B chains; disulfide-linked. Expressed by the venom gland.

It is found in the secreted. This venom insulin, from a fish-hunting cone snail, facilitates prey capture by rapidly inducing hypoglycemic shock. It is one of the smallest known insulin found in nature and lacks the C-terminal segment of the B chain that, in human insulin, mediates engagement of the insulin receptor (INSR) and assembly of the hormone's hexameric storage form. Despite lacking this segment, it both binds and activates human insulin receptor (long isoform (HIR-B) of INSR) with only a 10-fold lower potency. In vivo, intraperitoneal injection of this peptide into zebrafish lowers blood glucose with the same potency than human insulin. In addition, when applied to water, this peptide reduces overall locomotor activity of zebrafish larvae, observed as a significant decrease in the percentage of time spent swimming and movement frequency. The chain is Con-Ins G1b from Conus geographus (Geography cone).